A 179-amino-acid chain; its full sequence is ADP-ribosylation factor-like protein 5A (179 aa).

Glycine 2 carries the N-myristoyl glycine lipid modification. Residues glycine 23–threonine 30, aspartate 66–glutamine 70, asparagine 125–aspartate 128, and alanine 159 each bind GTP.

The protein belongs to the small GTPase superfamily. Arf family.

In terms of biological role, lacks ADP-ribosylation enhancing activity. In Mus musculus (Mouse), this protein is ADP-ribosylation factor-like protein 5A (Arl5a).